The following is a 1561-amino-acid chain: Formin-E (1561 aa).

Over residues 1–28 the composition is skewed to low complexity; it reads MDNHSSSSNPSSLSSSSSSSSSSSSFLS. Disordered regions lie at residues 1 to 63, 77 to 187, 211 to 279, and 305 to 365; these read MDNH…EEKP, EEEE…GKLS, PIIV…SSED, and ILRS…NLNY. A compositionally biased stretch (basic and acidic residues) spans 29–51; sequence DHVKKEEQNGLDTIKEEIENKIE. A coiled-coil region spans residues 32–85; that stretch reads KKEEQNGLDTIKEEIENKIENEEEEEKIEEKPIEKVEEEKIIVQKEEEEKIEEE. Positions 80-89 are enriched in acidic residues; that stretch reads EKIEEEPIEK. Positions 103-120 are enriched in polar residues; the sequence is DNINTTVEAKTLETSTEP. The stretch at 158–208 forms a coiled coil; that stretch reads EQQEQQEKQKEETKPSIREEVKEKIKGKLSEIKEEIKDIKEEIKHVIREEV. The segment covering 162–187 has biased composition (basic and acidic residues); it reads QQEKQKEETKPSIREEVKEKIKGKLS. Pro residues predominate over residues 220-229; the sequence is SPPPPPPPPS. The span at 230 to 258 shows a compositional bias: low complexity; the sequence is ITVQSSSPVSSQISSPVSSPVSSPKPSVT. Over residues 305-320 the composition is skewed to polar residues; sequence ILRSKSSPNPGANNPN. Low complexity predominate over residues 326–365; it reads NNSSSSSSSNNNSDNNNNSDNNSNNNNINNNNSSSNNLNY. The Phorbol-ester/DAG-type zinc finger occupies 379 to 427; sequence YHDFKIHRGTSSCVYCGENTRLWSTSYKCFFCGVVCHKKCLDSMNTIPC. Low complexity predominate over residues 465 to 534; the sequence is PSSITNSSSK…TSISSPPIAS (70 aa). A disordered region spans residues 465-549; the sequence is PSSITNSSSK…PLLQQQQQQQ (85 aa). Residues 541–573 adopt a coiled-coil conformation; the sequence is LLQQQQQQQQQQQQQQQQQQQQQQQQQQISTTQ. In terms of domain architecture, GBD/FH3 spans 581–929; the sequence is SEKPDDDMIN…QISLHKGGFE (349 aa). Residues 952–989 are a coiled coil; the sequence is LNRKLGELEKQNIDKAMKIQEQDINIKSLLDLLKQLKD. Disordered stretches follow at residues 1009-1092, 1466-1508, and 1526-1561; these read MEPP…VPKP, EEKR…SDED, and RQAKGRRRTTHQIATSKMISNNLDPSKILPTSPNKN. A compositionally biased stretch (low complexity) spans 1017–1033; it reads SVKSPDDPNNAAPIVVA. The FH1 domain occupies 1019–1081; that stretch reads KSPDDPNNAA…LGAKKPPAGV (63 aa). Residues 1034 to 1070 show a composition bias toward pro residues; sequence PIPPPPPPISGAPPPPPPPPPPMKGGAGPPPPPPPPG. Positions 1071 to 1081 are enriched in low complexity; it reads KLGAKKPPAGV. One can recognise an FH2 domain in the interval 1086 to 1475; the sequence is PPKVPKPSHP…EEKRLQQKQQ (390 aa). A coiled-coil region spans residues 1398-1491; it reads LATASTEVEK…RKLTTSNESA (94 aa). Basic and acidic residues predominate over residues 1466-1481; that stretch reads EEKRLQQKQQRQERAV. Polar residues-rich tracts occupy residues 1484–1498 and 1536–1561; these read LTTSNESASASPNHA and HQIATSKMISNNLDPSKILPTSPNKN. Residues 1488–1518 form the DAD domain; the sequence is NESASASPNHAKSTDDKSDEDDDIVNDLLMA.

This sequence belongs to the formin homology family. Diaphanous subfamily. In terms of assembly, interacts (via GBD/FH3 domain) with activated Rho-GTPases.

In terms of biological role, formins play an important role in the nucleation of actin and the formation of linear actin filaments. In Dictyostelium discoideum (Social amoeba), this protein is Formin-E (forE).